The primary structure comprises 201 residues: Adenylyl-sulfate kinase (201 aa).

35 to 42 (GLSGSGKS) is a binding site for ATP. Serine 109 serves as the catalytic Phosphoserine intermediate.

It belongs to the APS kinase family.

The catalysed reaction is adenosine 5'-phosphosulfate + ATP = 3'-phosphoadenylyl sulfate + ADP + H(+). It functions in the pathway sulfur metabolism; hydrogen sulfide biosynthesis; sulfite from sulfate: step 2/3. Catalyzes the synthesis of activated sulfate. The protein is Adenylyl-sulfate kinase of Citrobacter koseri (strain ATCC BAA-895 / CDC 4225-83 / SGSC4696).